A 669-amino-acid chain; its full sequence is Dymeclin (669 aa).

Glycine 2 is lipidated: N-myristoyl glycine.

It belongs to the dymeclin family. In terms of assembly, interacts with GOLM1 and PPIB. Myristoylated in vitro; myristoylation is not essential for protein targeting to Golgi compartment.

The protein resides in the cytoplasm. The protein localises to the golgi apparatus. It is found in the membrane. Necessary for correct organization of Golgi apparatus. Involved in bone development. The polypeptide is Dymeclin (DYM) (Pongo abelii (Sumatran orangutan)).